The following is an 84-amino-acid chain: MSSIIDYPLVTEKAMDEMDFQNKLQFIVDIDAAKPEIRDVVESEYDVTVVDVNTQITPEAEKKATVKLSAEDDAQDVASRIGVF.

Belongs to the universal ribosomal protein uL23 family. In terms of assembly, part of the 50S ribosomal subunit. Contacts protein L29.

Its function is as follows. Binds to 23S rRNA. One of the proteins that surrounds the polypeptide exit tunnel on the outside of the ribosome. The polypeptide is Large ribosomal subunit protein uL23 (Halobacterium salinarum (strain ATCC 700922 / JCM 11081 / NRC-1) (Halobacterium halobium)).